The sequence spans 279 residues: Protein BASIC PENTACYSTEINE2 (279 aa).

Residues 126–167 are disordered; the sequence is TKKRKTNAKAGSTPKAKKPRKPKDENSNNNNNNNTNVTRVKP. The segment covering 152 to 161 has biased composition (low complexity); sequence SNNNNNNNTN.

The protein belongs to the BBR/BPC family. As to expression, expressed in seedlings, leaves and pistils. Detected in the base of flowers and tips of carpels, in sepal and petal vasculature, in pollen grains, in young rosette, in the lateral and tip of primary roots, and in ovule at the exception of the outer integument.

It localises to the nucleus. Its function is as follows. Transcriptional regulator that specifically binds to GA-rich elements (GAGA-repeats) present in regulatory sequences of genes involved in developmental processes. In Arabidopsis thaliana (Mouse-ear cress), this protein is Protein BASIC PENTACYSTEINE2.